Here is a 292-residue protein sequence, read N- to C-terminus: 33 kDa chaperonin (292 aa).

Intrachain disulfides connect C230/C232 and C263/C266.

It belongs to the HSP33 family. Post-translationally, under oxidizing conditions two disulfide bonds are formed involving the reactive cysteines. Under reducing conditions zinc is bound to the reactive cysteines and the protein is inactive.

It is found in the cytoplasm. In terms of biological role, redox regulated molecular chaperone. Protects both thermally unfolding and oxidatively damaged proteins from irreversible aggregation. Plays an important role in the bacterial defense system toward oxidative stress. The polypeptide is 33 kDa chaperonin (Sodalis glossinidius (strain morsitans)).